Here is a 432-residue protein sequence, read N- to C-terminus: Ribulose bisphosphate carboxylase-like protein 2 (432 aa).

The Mg(2+) site is built by lysine 198, aspartate 200, and glutamate 201. Lysine 198 bears the N6-carboxylysine mark.

The protein belongs to the RuBisCO large chain family. Type IV subfamily. Homodimer. Requires Mg(2+) as cofactor.

May be involved in sulfur metabolism and oxidative stress response. Does not show RuBisCO activity. This chain is Ribulose bisphosphate carboxylase-like protein 2 (rlp2), found in Rhodopseudomonas palustris (strain ATCC BAA-98 / CGA009).